The chain runs to 512 residues: Transmembrane protein 102 (512 aa).

The Extracellular segment spans residues 1–267 (MASAVWGNAP…EAWPTLCPAQ (267 aa)). Positions 168-258 (PVPGGRDWIH…PGPQPSEARE (91 aa)) are disordered. 2 stretches are compositionally biased toward basic and acidic residues: residues 174-186 (DWIH…EGPR) and 195-209 (PHSD…ESLE). Residues 210 to 226 (KSPSNVSVPESPQQNLT) are compositionally biased toward polar residues. A helical transmembrane segment spans residues 268–284 (VAAWFFASLAAVAESLF). Residues 285–512 (PVPGAPRLVH…GLAGVGAGSH (228 aa)) lie on the Cytoplasmic side of the membrane.

As to quaternary structure, interacts with CSF2RB; this interaction occurs preferentially in the absence of CSF2.

Its subcellular location is the cell membrane. Functionally, selectively involved in CSF2 deprivation-induced apoptosis via a mitochondria-dependent pathway. The protein is Transmembrane protein 102 (TMEM102) of Bos taurus (Bovine).